Here is an 84-residue protein sequence, read N- to C-terminus: Beta-mammal toxin Cn2 (84 aa).

The N-terminal stretch at 1-16 is a signal peptide; it reads LLIITACLALIGTVWA. An LCN-type CS-alpha/beta domain is found at 17-82; sequence KEGYLVDKNT…VWPLPNKRCS (66 aa). Cystine bridges form between cysteine 28–cysteine 81, cysteine 32–cysteine 57, cysteine 41–cysteine 62, and cysteine 45–cysteine 64. Position 82 is a serine amide (serine 82).

This sequence belongs to the long (4 C-C) scorpion toxin superfamily. Sodium channel inhibitor family. Beta subfamily. Expressed by the venom gland.

The protein resides in the secreted. Its function is as follows. Mammal beta-toxins bind voltage-independently at site-4 of sodium channels (Nav) and shift the activation voltage to more negative potentials. This toxin is active against mammals. The chain is Beta-mammal toxin Cn2 from Centruroides noxius (Mexican scorpion).